A 145-amino-acid chain; its full sequence is Large ribosomal subunit protein uL13 (145 aa).

The protein belongs to the universal ribosomal protein uL13 family. In terms of assembly, part of the 50S ribosomal subunit.

In terms of biological role, this protein is one of the early assembly proteins of the 50S ribosomal subunit, although it is not seen to bind rRNA by itself. It is important during the early stages of 50S assembly. This is Large ribosomal subunit protein uL13 from Geobacillus thermodenitrificans (strain NG80-2).